We begin with the raw amino-acid sequence, 242 residues long: Venom nerve growth factor 2 (242 aa).

Positions 1–18 are cleaved as a signal peptide; it reads MSMLCYTLIIAFLIGIWA. The propeptide occupies 19-125; it reads APQSEDNVPL…ALNRNIQAKR (107 aa). Residues 47-66 are compositionally biased toward basic and acidic residues; it reads DLKTSRNTDQRHPAPKKADD. Residues 47–70 form a disordered region; the sequence is DLKTSRNTDQRHPAPKKADDQELG. Intrachain disulfides connect C139–C203, C181–C231, and C191–C233.

The protein belongs to the NGF-beta family. Homodimer; non-covalently linked. In terms of tissue distribution, expressed by the venom gland.

The protein localises to the secreted. In terms of biological role, nerve growth factor is important for the development and maintenance of the sympathetic and sensory nervous systems. It stimulates division and differentiation of sympathetic and embryonic sensory neurons as well as basal forebrain cholinergic neurons in the brain. Its relevance in the snake venom is not clear. However, it has been shown to inhibit metalloproteinase-dependent proteolysis of platelet glycoprotein Ib alpha, suggesting a metalloproteinase inhibition to prevent metalloprotease autodigestion and/or protection against prey proteases. Binds a lipid between the two protein chains in the homodimer. The lipid-bound form promotes histamine relase from mouse mast cells, contrary to the lipid-free form. This is Venom nerve growth factor 2 from Pseudechis australis (Mulga snake).